We begin with the raw amino-acid sequence, 132 residues long: Small ribosomal subunit protein uS8 (132 aa).

It belongs to the universal ribosomal protein uS8 family. In terms of assembly, part of the 30S ribosomal subunit. Contacts proteins S5 and S12.

In terms of biological role, one of the primary rRNA binding proteins, it binds directly to 16S rRNA central domain where it helps coordinate assembly of the platform of the 30S subunit. This is Small ribosomal subunit protein uS8 from Leuconostoc citreum (strain KM20).